The following is a 1178-amino-acid chain: MDDEGAPLSESAQVVDPDVRAHVYSLVTALGGFNGENADRYVLGDDALACLRDIKRWLKLHDEKNNRMDVARCLGEANLVNGDLLPILTLWSTSGQNSKFMSRIALACLELLVPLTWPLELHSEMTVNHHRHTPYLQQAQVLYKRGILGPGGSSLLRTIIRIGLPSMAVPRSDRTTRDEGILKLMLYLLRNIAVISPHSRLSAEGDEEETSRSATINAFQDQDAFALLLTMCSNVADDFNLQDVVLLEILFHIVKGVNVEKLFMNDTQRKAKRTEELGDLLQKESSLRREYAKNAPTRHGRFGTMIWVKRDDAKVSTVSGQDVLKDSQTTLYKMDQSKKWNKPQVRRRQTEVTVNNDFNTPVNLNSTATKNLRIFIEEFLDSGFNPLFTHVRKAIEREADRIMDINSRHYFYTVAWFLEAERVRRKYQRERHSQEDKSLKKMEPDSFALVASVLNQETFVFLNRSMQKSFDNKEVEDLTAEMRCFTQILLTVQEMAQSPLDDDQEVADNIQNRIFYEETTHDRIISIIRGYKDQGFGYLDACTQLAHVFLRMLEHYSKENVDMQIRSRRRIKRKAKQDDQAIDVEDEEHASEDEELMEAERVSKERKFDFKRFAAKFCNQKCVDTFVAFIKYYKELNTDQLKRAHRYFYRIAFKQEMSVLLFRLDIINLFYRMIKGPGALDSSKPIFKEWEELVRQILRRMIKKIDQRPALITELLFSKINSTVFYLEFGFEKQTISVSKRPPAELEVDPREAKTTDEKLSIVVRVMIKDEHINLVKWISEVLRLAADERESWESREQQPGEPTAPNPMIPVKPDDEACQKAMFSNAKLRLLMTLIGFERLGMEDVPGASWVVPSSFTSDDLRHTKRVIDQCLIEPATEDPDQDLSRLIRRKYANDARGGGRDEQNLDIDFGSDSEGEDNVPDGPLFPPNHRSKANALDQLKKQRQKRRKEDGDRETPDDEVLEERRRARLENALARQAKIKSDLYIHASDEESDEEADEEFFRLEEQRRKEQAARIKHALLHGVVEEISDKSSKKTGRKRQSDQHTTLNIDAHTKRQRRKNRTDKLDEGDDLVMAGTEAQSPDSPGLGSSSHDAKGIENTPLTSDEDELEFDDDLAFSRDRNRRKDFTPNVDKMVIEPAQQDADPAAPDEDDDEDAPVVGSSRRRVRGGFVIESDSE.

4 disordered regions span residues 576-596, 792-811, 896-965, and 980-1178; these read KQDD…DEEL, SWES…PMIP, DARG…VLEE, and KIKS…SDSE. The span at 580–596 shows a compositional bias: acidic residues; the sequence is QAIDVEDEEHASEDEEL. Residues 896–905 show a composition bias toward basic and acidic residues; that stretch reads DARGGGRDEQ. Residues 911-921 show a composition bias toward acidic residues; it reads FGSDSEGEDNV. Composition is skewed to basic and acidic residues over residues 981–991, 1001–1015, and 1025–1034; these read IKSDLYIHASD, EFFR…EQAA, and VVEEISDKSS. Polar residues predominate over residues 1079 to 1092; that stretch reads EAQSPDSPGLGSSS. Over residues 1105–1116 the composition is skewed to acidic residues; sequence SDEDELEFDDDL. Positions 1117-1128 are enriched in basic and acidic residues; it reads AFSRDRNRRKDF. Low complexity predominate over residues 1138-1147; the sequence is EPAQQDADPA. Residues 1148 to 1157 show a composition bias toward acidic residues; the sequence is APDEDDDEDA.

It belongs to the timeless family. As to quaternary structure, component of the fork protection complex (FPC) consisting of tof1 and csm3.

The protein resides in the nucleus. In terms of biological role, forms a fork protection complex (FPC) with csm3 and which is required for chromosome segregation during meiosis and DNA damage repair. FPC coordinates leading and lagging strand synthesis and moves with the replication fork. FPC stabilizes replication forks in a configuration that is recognized by replication checkpoint sensors. The polypeptide is Topoisomerase 1-associated factor 1 (tof1) (Aspergillus clavatus (strain ATCC 1007 / CBS 513.65 / DSM 816 / NCTC 3887 / NRRL 1 / QM 1276 / 107)).